Consider the following 201-residue polypeptide: LexA repressor 1 (201 aa).

A DNA-binding region (H-T-H motif) is located at residues 27–47 (LAEIAQAFGFASRNAAQKHVQ). Catalysis depends on for autocatalytic cleavage activity residues Ser122 and Lys159.

The protein belongs to the peptidase S24 family. As to quaternary structure, homodimer.

It carries out the reaction Hydrolysis of Ala-|-Gly bond in repressor LexA.. Its function is as follows. Represses a number of genes involved in the response to DNA damage (SOS response), including recA and lexA. In the presence of single-stranded DNA, RecA interacts with LexA causing an autocatalytic cleavage which disrupts the DNA-binding part of LexA, leading to derepression of the SOS regulon and eventually DNA repair. The sequence is that of LexA repressor 1 from Xanthomonas axonopodis pv. citri (strain 306).